Reading from the N-terminus, the 201-residue chain is Orotidine 5'-phosphate decarboxylase (201 aa).

Residues Asp-8, Lys-26, Asp-52 to Thr-61, Thr-106, Arg-153, Gln-161, Gly-180, and Arg-181 each bind substrate. The Proton donor role is filled by Lys-54.

The protein belongs to the OMP decarboxylase family. Type 1 subfamily. Homodimer.

It carries out the reaction orotidine 5'-phosphate + H(+) = UMP + CO2. It functions in the pathway pyrimidine metabolism; UMP biosynthesis via de novo pathway; UMP from orotate: step 2/2. Functionally, catalyzes the decarboxylation of orotidine 5'-monophosphate (OMP) to uridine 5'-monophosphate (UMP). The protein is Orotidine 5'-phosphate decarboxylase (pyrF) of Thermotoga maritima (strain ATCC 43589 / DSM 3109 / JCM 10099 / NBRC 100826 / MSB8).